Reading from the N-terminus, the 468-residue chain is Cyclin-dependent kinase 14 (468 aa).

3 positions are modified to phosphoserine: Ser-24, Ser-77, and Ser-94. Residues 102–131 form a disordered region; sequence FKSSSAGKESPKVRRHSSPSSPTSPKFGKA. The residue at position 133 (Ser-133) is a Phosphoserine. Positions 134–418 constitute a Protein kinase domain; that stretch reads YEKLEKLGEG…AQAALSHEYF (285 aa). Residues 140–148 and Lys-163 each bind ATP; that span reads LGEGSYATV. Catalysis depends on Asp-255, which acts as the Proton acceptor. A disordered region spans residues 448–468; the sequence is ESMRAFGKNSSYGKSLSNSKH. Positions 455 to 468 are enriched in polar residues; the sequence is KNSSYGKSLSNSKH.

This sequence belongs to the protein kinase superfamily. CMGC Ser/Thr protein kinase family. CDC2/CDKX subfamily. Found in a complex with LRP6, CCNY and CAPRIN2 during G2/M stage; CAPRIN2 functions as a scaffold for the complex by binding to CCNY via its N terminus and to CDK14 via its C terminus. Interacts with CCNY; CCNY mediates its recruitment to the plasma membrane and promotes phosphorylation of LRP6. Interacts with CCDN3 and CDKN1A. Interacts with SEPT8. Interacts with 14-3-3 proteina YWHAB, YWHAE, YWHAH and YWHAQ.

The protein resides in the cell membrane. Its subcellular location is the cytoplasm. The protein localises to the nucleus. It carries out the reaction L-seryl-[protein] + ATP = O-phospho-L-seryl-[protein] + ADP + H(+). The catalysed reaction is L-threonyl-[protein] + ATP = O-phospho-L-threonyl-[protein] + ADP + H(+). Serine/threonine-protein kinase activity is promoted by associated cyclins CCDN3 and CCNY and repressed by CDKN1A. Its function is as follows. Serine/threonine-protein kinase involved in the control of the eukaryotic cell cycle, whose activity is controlled by an associated cyclin. Acts as a cell-cycle regulator of Wnt signaling pathway during G2/M phase by mediating the phosphorylation of LRP6 at 'Ser-1490', leading to the activation of the Wnt signaling pathway. Acts as a regulator of cell cycle progression and cell proliferation via its interaction with CCDN3. Phosphorylates RB1 in vitro, however the relevance of such result remains to be confirmed in vivo. May also play a role in meiosis, neuron differentiation and may indirectly act as a negative regulator of insulin-responsive glucose transport. The protein is Cyclin-dependent kinase 14 (CDK14) of Oryctolagus cuniculus (Rabbit).